The chain runs to 487 residues: NADH-quinone oxidoreductase subunit N (487 aa).

A run of 14 helical transmembrane segments spans residues 16-36 (VIMPEVILSVLGMALLLVNVF), 45-65 (LAWLSLIGIVGAGFAAVTGWG), 79-99 (NFAIFFKIIFLLAAGLAVLIS), 111-131 (GELYPIILFTTVGMMLMAAAT), 133-153 (LMTIFLGLELMSISLYVLAGF), 168-188 (FLLGAFSTGFLLYGMALIYGV), 212-232 (LLIGMFLMLTGFLFKIAAAPF), 257-276 (AAGFAAMLRLLLVAFPAMIA), 281-298 (LLWILAVLTMTVGNFTAL), 306-326 (MLAYSSIAHAGYCLVGFASGT), 333-353 (ILFYMLSYTFMNIGAFAVIVL), 378-398 (ALAMTVFMFSLAGMPPTAGFI), 413-435 (IWLAIIGVLNSAASVYYYLRVIV), and 457-477 (LALVVSAAGSLIPGIIPSMIL).

Belongs to the complex I subunit 2 family. In terms of assembly, NDH-1 is composed of 14 different subunits. Subunits NuoA, H, J, K, L, M, N constitute the membrane sector of the complex.

It is found in the cell inner membrane. The catalysed reaction is a quinone + NADH + 5 H(+)(in) = a quinol + NAD(+) + 4 H(+)(out). NDH-1 shuttles electrons from NADH, via FMN and iron-sulfur (Fe-S) centers, to quinones in the respiratory chain. The immediate electron acceptor for the enzyme in this species is believed to be ubiquinone. Couples the redox reaction to proton translocation (for every two electrons transferred, four hydrogen ions are translocated across the cytoplasmic membrane), and thus conserves the redox energy in a proton gradient. This is NADH-quinone oxidoreductase subunit N from Trichlorobacter lovleyi (strain ATCC BAA-1151 / DSM 17278 / SZ) (Geobacter lovleyi).